The primary structure comprises 889 residues: Cytoplasmic aconitate hydratase (889 aa).

Residues Gln86 and 205 to 207 (DSH) contribute to the substrate site. Residues Cys437, Cys503, and Cys506 each contribute to the [4Fe-4S] cluster site. Residues Arg536, Arg541, Arg699, and 779–780 (SR) contribute to the substrate site.

Belongs to the aconitase/IPM isomerase family. In terms of assembly, interacts (when associated with the 4Fe-4S) with FBXL5. Interacts with frataxin(81-210). [4Fe-4S] cluster is required as a cofactor.

Its subcellular location is the cytoplasm. It localises to the cytosol. The catalysed reaction is citrate = D-threo-isocitrate. Its function is as follows. Bifunctional iron sensor that switches between 2 activities depending on iron availability. Iron deprivation, promotes its mRNA binding activity through which it regulates the expression of genes involved in iron uptake, sequestration and utilization. Binds to iron-responsive elements (IRES) in the untranslated region of target mRNAs preventing for instance the translation of ferritin and aminolevulinic acid synthase and stabilizing the transferrin receptor mRNA. In terms of biological role, conversely, when cellular iron levels are high, binds a 4Fe-4S cluster which precludes RNA binding activity and promotes the aconitase activity, the isomerization of citrate to isocitrate via cis-aconitate. This chain is Cytoplasmic aconitate hydratase (ACO1), found in Oryctolagus cuniculus (Rabbit).